We begin with the raw amino-acid sequence, 598 residues long: (-)-endo-fenchol synthase, chloroplastic (598 aa).

The N-terminal 34 residues, 1–34 (MWSTISISMNVAILKKPLNFLHNSNNKASNPRCV), are a transit peptide targeting the chloroplast. Residues Asp351, Asp355, Asp495, Thr499, and Glu503 each coordinate Mg(2+). The DDXXD motif motif lies at 351 to 355 (DDVYD).

The protein belongs to the terpene synthase family. It depends on Mg(2+) as a cofactor. The cofactor is Mn(2+).

The protein localises to the plastid. Its subcellular location is the chloroplast. It carries out the reaction (2E)-geranyl diphosphate + H2O = (1S,2S,4R)-endo-fenchol + diphosphate. It functions in the pathway secondary metabolite biosynthesis; terpenoid biosynthesis. Functionally, monoterpene synthase that catalyzes the formation of fenchol from geranyl diphosphate. This Ocimum basilicum (Sweet basil) protein is (-)-endo-fenchol synthase, chloroplastic (FES).